The sequence spans 528 residues: Intestinal-type alkaline phosphatase (528 aa).

An N-terminal signal peptide occupies residues 1 to 19 (MQGPWVLLLLGLRLQLSLG). Aspartate 61 provides a ligand contact to Mg(2+). 2 residues coordinate Zn(2+): aspartate 61 and serine 111. Serine 111 functions as the Phosphoserine intermediate in the catalytic mechanism. A disulfide bridge connects residues cysteine 140 and cysteine 202. Asparagine 141 carries an N-linked (GlcNAc...) asparagine glycan. Position 174 (serine 174) interacts with Mg(2+). Glutamate 235 lines the Ca(2+) pocket. N-linked (GlcNAc...) asparagine glycosylation occurs at asparagine 268. Phenylalanine 288, glutamate 289, and aspartate 304 together coordinate Ca(2+). Glutamate 330 is a binding site for Mg(2+). Positions 335, 339, 376, and 377 each coordinate Zn(2+). Asparagine 429 carries N-linked (GlcNAc...) asparagine glycosylation. Position 451 (histidine 451) interacts with Zn(2+). Cysteines 486 and 493 form a disulfide. Aspartate 503 carries GPI-anchor amidated aspartate lipidation. The propeptide at 504 to 528 (AAHPVAASLPLLAGTLLLLGASAAP) is removed in mature form.

The protein belongs to the alkaline phosphatase family. In terms of assembly, homodimer. It depends on Mg(2+) as a cofactor. Zn(2+) is required as a cofactor. The cofactor is Ca(2+).

It is found in the cell membrane. It carries out the reaction a phosphate monoester + H2O = an alcohol + phosphate. In terms of biological role, alkaline phosphatase that can hydrolyze various phosphate compounds. The polypeptide is Intestinal-type alkaline phosphatase (ALPI) (Homo sapiens (Human)).